Reading from the N-terminus, the 536-residue chain is Protein scd2/ral3 (536 aa).

Positions 24–86 (PPRKVIRALY…PVSHFEEIGK (63 aa)) constitute an SH3 1 domain. The interval 88 to 115 (VKSERDSDGSGQISFTDLTTNSSTTRSS) is disordered. The span at 101-115 (SFTDLTTNSSTTRSS) shows a compositional bias: low complexity. Residues 123 to 185 (SQPLFGIVQF…PLSFIQLRDL (63 aa)) form the SH3 2 domain. The PX domain occupies 293–413 (SSEPTVVAAM…LFFLPLDGDV (121 aa)). Residues 459–533 (TCKVKVRLGD…ESGVLLFAER (75 aa)) enclose the PB1 domain.

In terms of assembly, scd1, scd2, cdc42, and ras1, in its GTP-bound state, act cooperatively to form a protein complex.

Required for mating and morphogenesis. Interacts directly with scd1 and with cdc42. May bridge and facilitate scd1 and cdc42 interactions. The sequence is that of Protein scd2/ral3 (scd2) from Schizosaccharomyces pombe (strain 972 / ATCC 24843) (Fission yeast).